We begin with the raw amino-acid sequence, 388 residues long: MNLHEYQAKALFAEYGLPVSEGYACDTPQEAVEAAGRIGGNMWVVKCQVHAGGRGKAGGVKVTGDKEEIRAFAEKWLGKNLVTYQTDENGQPVAKILVESCTDIANELYLGAVVDRATRRVVFMASTEGGVEIEKVAEETPELIHKAIIDPIAGPQPFQARDLGFKLGLNPTQMKQFTKIFMGLAQMFLDHDFALLEINPLVITTEGNLHCLDGKIGVDGNALFRQPKIKDMHDPSQDDAREAHAAKFELNYVALDGNVGCMVNGAGLAMGTMDIVNLHGGKPANFLDVGGGATKERVSEAFKIILSDSNVKAVLVNIFGGIVRCDMIAEGIIGAVKEVGVKVPVVVRLEGTNAELGAKVLAESGLDIIAAKSLTDAAQQVVKAAEGK.

Positions K9–H244 constitute an ATP-grasp domain. ATP is bound by residues K46, G53 to G55, E99, T102, and E107. Residues N199 and D213 each contribute to the Mg(2+) site. Residues N264 and G321–V323 each bind substrate.

Belongs to the succinate/malate CoA ligase beta subunit family. As to quaternary structure, heterotetramer of two alpha and two beta subunits. Requires Mg(2+) as cofactor.

The enzyme catalyses succinate + ATP + CoA = succinyl-CoA + ADP + phosphate. It carries out the reaction GTP + succinate + CoA = succinyl-CoA + GDP + phosphate. It participates in carbohydrate metabolism; tricarboxylic acid cycle; succinate from succinyl-CoA (ligase route): step 1/1. Functionally, succinyl-CoA synthetase functions in the citric acid cycle (TCA), coupling the hydrolysis of succinyl-CoA to the synthesis of either ATP or GTP and thus represents the only step of substrate-level phosphorylation in the TCA. The beta subunit provides nucleotide specificity of the enzyme and binds the substrate succinate, while the binding sites for coenzyme A and phosphate are found in the alpha subunit. This Shewanella amazonensis (strain ATCC BAA-1098 / SB2B) protein is Succinate--CoA ligase [ADP-forming] subunit beta.